The primary structure comprises 344 residues: N-acetyl-gamma-glutamyl-phosphate reductase (344 aa).

Residue Cys150 is part of the active site.

It belongs to the NAGSA dehydrogenase family. Type 1 subfamily.

The protein localises to the cytoplasm. It catalyses the reaction N-acetyl-L-glutamate 5-semialdehyde + phosphate + NADP(+) = N-acetyl-L-glutamyl 5-phosphate + NADPH + H(+). It functions in the pathway amino-acid biosynthesis; L-arginine biosynthesis; N(2)-acetyl-L-ornithine from L-glutamate: step 3/4. In terms of biological role, catalyzes the NADPH-dependent reduction of N-acetyl-5-glutamyl phosphate to yield N-acetyl-L-glutamate 5-semialdehyde. In Pseudomonas putida (strain W619), this protein is N-acetyl-gamma-glutamyl-phosphate reductase.